We begin with the raw amino-acid sequence, 488 residues long: Serine hydroxymethyltransferase, mitochondrial (488 aa).

The transit peptide at 1–20 (MAVLRQFVKNSYSSIPKRFY) directs the protein to the mitochondrion. The residue at position 265 (Lys-265) is an N6-(pyridoxal phosphate)lysine.

This sequence belongs to the SHMT family. Homotetramer. It depends on pyridoxal 5'-phosphate as a cofactor.

Its subcellular location is the mitochondrion. The catalysed reaction is (6R)-5,10-methylene-5,6,7,8-tetrahydrofolate + glycine + H2O = (6S)-5,6,7,8-tetrahydrofolate + L-serine. It participates in one-carbon metabolism; tetrahydrofolate interconversion. In terms of biological role, interconversion of serine and glycine. The protein is Serine hydroxymethyltransferase, mitochondrial (shm2) of Schizosaccharomyces pombe (strain 972 / ATCC 24843) (Fission yeast).